The sequence spans 314 residues: BCL2/adenovirus E1B 19 kDa protein-interacting protein 2 (314 aa).

Residues 1 to 21 (MEGVELKEEWQDEDFPIPLPE) form a disordered region. Residues 10-21 (WQDEDFPIPLPE) are compositionally biased toward acidic residues. 2 positions are modified to phosphoserine: serine 41 and serine 77. The interval 76-100 (ESGEIDLDGLDTPSENSNEFEWEDD) is disordered. The residue at position 87 (threonine 87) is a Phosphothreonine. 3 positions are modified to phosphoserine: serine 89, serine 92, and serine 114. In terms of domain architecture, CRAL-TRIO spans 147 to 304 (IEPYKKVISH…CIKQVDQELN (158 aa)).

It is found in the cytoplasm. It localises to the perinuclear region. In terms of biological role, implicated in the suppression of cell death. Interacts with the BCL-2 and adenovirus E1B 19 kDa proteins. The sequence is that of BCL2/adenovirus E1B 19 kDa protein-interacting protein 2 (BNIP2) from Homo sapiens (Human).